Here is a 907-residue protein sequence, read N- to C-terminus: Dual serine/threonine and tyrosine protein kinase (907 aa).

Positions 373–409 (RKKENELYESLMNIANRKQEEMKDMIVETLNTMKEEL) form a coiled coil. One can recognise a Protein kinase domain in the interval 630-884 (PKLGQELGRG…PLLGIVQPML (255 aa)). ATP contacts are provided by residues 636–644 (LGRGQYGVV) and K659. The active-site Proton acceptor is D755.

The protein belongs to the protein kinase superfamily. Ser/Thr protein kinase family.

The protein resides in the cytoplasm. It is found in the cell membrane. Its subcellular location is the apical cell membrane. The protein localises to the basolateral cell membrane. It localises to the cell junction. It carries out the reaction L-seryl-[protein] + ATP = O-phospho-L-seryl-[protein] + ADP + H(+). The enzyme catalyses L-threonyl-[protein] + ATP = O-phospho-L-threonyl-[protein] + ADP + H(+). It catalyses the reaction L-tyrosyl-[protein] + ATP = O-phospho-L-tyrosyl-[protein] + ADP + H(+). Functionally, acts as a positive regulator of ERK phosphorylation downstream of fibroblast growth factor-receptor activation. Involved in the regulation of both caspase-dependent apoptosis and caspase-independent cell death. In the skin, it plays a predominant role in suppressing caspase-dependent apoptosis in response to UV stress in a range of dermal cell types. This Macaca mulatta (Rhesus macaque) protein is Dual serine/threonine and tyrosine protein kinase.